A 336-amino-acid chain; its full sequence is F420-dependent glucose-6-phosphate dehydrogenase (336 aa).

D37 lines the coenzyme F420-(gamma-Glu)n pocket. H38 serves as the catalytic Proton donor. Coenzyme F420-(gamma-Glu)n-binding positions include T74 and 105–106 (SG). E107 serves as the catalytic Proton acceptor. Residues N110, 173–174 (SG), and 176–177 (SA) contribute to the coenzyme F420-(gamma-Glu)n site. Substrate contacts are provided by T191, K194, K255, and R279.

It belongs to the F420-dependent glucose-6-phosphate dehydrogenase family. As to quaternary structure, homodimer.

The enzyme catalyses oxidized coenzyme F420-(gamma-L-Glu)(n) + D-glucose 6-phosphate + H(+) = 6-phospho-D-glucono-1,5-lactone + reduced coenzyme F420-(gamma-L-Glu)(n). Functionally, catalyzes the coenzyme F420-dependent oxidation of glucose 6-phosphate (G6P) to 6-phosphogluconolactone. The sequence is that of F420-dependent glucose-6-phosphate dehydrogenase from Beutenbergia cavernae (strain ATCC BAA-8 / DSM 12333 / CCUG 43141 / JCM 11478 / NBRC 16432 / NCIMB 13614 / HKI 0122).